The chain runs to 125 residues: Thioredoxin H-type (125 aa).

One can recognise a Thioredoxin domain in the interval 2–112 (AEGNVFACHS…LERKVAALAA (111 aa)). Residues Cys38 and Cys41 each act as nucleophile in the active site. Cysteines 38 and 41 form a disulfide.

The protein belongs to the thioredoxin family. Plant H-type subfamily.

It localises to the cytoplasm. Participates in various redox reactions through the reversible oxidation of the active center dithiol to a disulfide. The H form is known to activate a number of cytosolic enzymes. This chain is Thioredoxin H-type (SB09), found in Picea mariana (Black spruce).